A 101-amino-acid polypeptide reads, in one-letter code: Small ribosomal subunit protein uS14 (101 aa).

It belongs to the universal ribosomal protein uS14 family. As to quaternary structure, part of the 30S ribosomal subunit. Contacts proteins S3 and S10.

Its function is as follows. Binds 16S rRNA, required for the assembly of 30S particles and may also be responsible for determining the conformation of the 16S rRNA at the A site. In Shewanella woodyi (strain ATCC 51908 / MS32), this protein is Small ribosomal subunit protein uS14.